The primary structure comprises 458 residues: Elongation factor 1-alpha (458 aa).

Glycine 2 is modified (n,N,N-trimethylglycine; by EFM7). Residue lysine 3 is modified to N6,N6-dimethyllysine; by EFM7; alternate. Lysine 3 carries the N6-methyllysine; by EFM7; alternate modification. The 236-residue stretch at 5–240 (KSHINVVVIG…DAIEQPSRPT (236 aa)) folds into the tr-type G domain. The tract at residues 14-21 (GHVDSGKS) is G1. Serine 18 carries the phosphoserine modification. Positions 21 and 22 each coordinate GTP. Lysine 30 carries the post-translational modification N6-methyllysine; by EFM1. Residues 70–74 (GITID) form a G2 region. Threonine 72 carries the post-translational modification Phosphothreonine. Lysine 79 carries the post-translational modification N6,N6,N6-trimethyllysine; by EFM5. A Phosphothreonine modification is found at threonine 82. The segment at 91–94 (DAPG) is G3. GTP-binding residues include asparagine 153, lysine 154, and aspartate 156. Positions 153–156 (NKMD) are G4. Residue serine 163 is modified to Phosphoserine. GTP contacts are provided by serine 192, glycine 193, and tryptophan 194. The segment at 192–194 (SGW) is G5. Residues lysine 224, lysine 242, and lysine 253 each participate in a glycyl lysine isopeptide (Lys-Gly) (interchain with G-Cter in ubiquitin) cross-link. Threonine 259 bears the Phosphothreonine mark. Residue lysine 271 forms a Glycyl lysine isopeptide (Lys-Gly) (interchain with G-Cter in ubiquitin) linkage. Serine 289 is modified (phosphoserine). An N6,N6-dimethyllysine; by EFM4; alternate modification is found at lysine 316. Residue lysine 316 is modified to N6-methyllysine; by EFM4; alternate. Lysine 390 is modified (N6-methyllysine; by EFM6). Residue lysine 393 forms a Glycyl lysine isopeptide (Lys-Gly) (interchain with G-Cter in ubiquitin) linkage. Position 414 is a phosphoserine (serine 414). A Phosphothreonine modification is found at threonine 430. Lysine 437 participates in a covalent cross-link: Glycyl lysine isopeptide (Lys-Gly) (interchain with G-Cter in ubiquitin). Lysine 458 carries the post-translational modification Lysine methyl ester.

Belongs to the TRAFAC class translation factor GTPase superfamily. Classic translation factor GTPase family. EF-Tu/EF-1A subfamily. In terms of assembly, the eukaryotic elongation factor 1 complex (eEF1) is probably a heterohexamer. Two trimeric complexes, each composed of eEF1A (TEF1 or TEF2), eEF1Balpha (EFB1) and eEF1Bgamma (CAM1 or TEF4), are probably dimerized via the eF1Bgamma subunits. Interacts with eEF1Balpha; the interaction is direct. Interacts with GCN2 (via C-terminus); this interaction is direct, occurs in amino acid-repleted cells, may be stabilized in a ribosome-dependent manner, reduces GCN2-mediated eIF-2-alpha phosphorylation and is lost in amino acid-starved cells and by uncharged tRNAs. Interacts with CEX1. Interacts with elongation factor 3 (YEF3 or HEF3). Interacts with NAP1. Interacts with SRV2. Interacts with chaperone ZPR1; the interaction is required for its proper folding. Binds to actin and forms a ternary complex with BNI1 and profilin. Interacts with the proteasome, probably via RPT1. Associates with ribosomes. In terms of processing, S-thiolated in response to oxidative stress, probably inhibiting the protein and causing a reduction in protein synthesis. Post-translationally, glutaminylated at Glu-45. An L-glutamine is linked to Glu-45 via the alpha amino group. This glutaminylation is yeast-specific and not essential for the normal functions of eEF1A. However, eEF1A glutaminylation slightly reduced growth under antibiotic-induced translational stress conditions.

It localises to the cytoplasm. The protein localises to the cytoskeleton. The protein operates within protein biosynthesis; polypeptide chain elongation. With respect to regulation, inhibited by narciclasine. In terms of biological role, GTP-binding component of the eukaryotic elongation factor 1 complex (eEF1). In its active GTP-bound form, binds to and delivers aminoacyl-tRNA to the A-site of ribosomes during protein biosynthesis. In the presence of a correct codon-anticodon match between the aminoacyl-tRNA and the A-site codon of the ribosome-bound mRNA, the ribosome acts as a GTPase activator and the GTP is hydrolyzed. The inactive GDP-bound form leaves the ribosome and must be recycled by its guanine nucleotide exchange factor (GEF) (eEF1B subcomplex) before binding another molecule of aminoacyl-tRNA. Required for nuclear export of aminoacyl-tRNAs. May also be involved in translational quality control by targeting cotranslationally damaged proteins to the proteasome. Also exhibits actin filament-binding and -bundling activities and is involved in cytoskeleton organization. Plays a role as a negative regulator of GCN2 kinase activity by inhibiting GCN2-mediated eIF-2-alpha phosphorylation in amino acid-repleted cells. This is Elongation factor 1-alpha (TEF1) from Saccharomyces cerevisiae (strain ATCC 204508 / S288c) (Baker's yeast).